The following is a 44-amino-acid chain: Small, acid-soluble spore protein N (44 aa).

Positions 1 to 44 (MGNPKKNSKDFAPNHIGTQSKKAGGNKGKQMQDQTGKQPIVDNG) are disordered.

This sequence belongs to the SspN family.

The protein resides in the spore core. This chain is Small, acid-soluble spore protein N, found in Bacillus anthracis (strain A0248).